The following is a 122-amino-acid chain: Large ribosomal subunit protein uL14c (122 aa).

The protein belongs to the universal ribosomal protein uL14 family. In terms of assembly, part of the 50S ribosomal subunit.

Its subcellular location is the plastid. The protein resides in the chloroplast. Its function is as follows. Binds to 23S rRNA. The sequence is that of Large ribosomal subunit protein uL14c from Citrus sinensis (Sweet orange).